Reading from the N-terminus, the 807-residue chain is Dual specificity protein phosphatase PPS1 (807 aa).

Positions 585–783 constitute a Tyrosine-protein phosphatase domain; sequence LPSRILRHLY…LFKWWKKHYN (199 aa). Residues 593 to 807 form a catalytic region; it reads LYLGSLDHAQ…GIAEVNMKYT (215 aa). The active-site Phosphocysteine intermediate is Cys725.

It belongs to the protein-tyrosine phosphatase family. Non-receptor class dual specificity subfamily.

It carries out the reaction O-phospho-L-tyrosyl-[protein] + H2O = L-tyrosyl-[protein] + phosphate. The enzyme catalyses O-phospho-L-seryl-[protein] + H2O = L-seryl-[protein] + phosphate. The catalysed reaction is O-phospho-L-threonyl-[protein] + H2O = L-threonyl-[protein] + phosphate. Protein phosphatase with specificity for serine, threonine, and tyrosine residues; has a role in the DNA synthesis phase of the cell cycle. In Saccharomyces cerevisiae (strain ATCC 204508 / S288c) (Baker's yeast), this protein is Dual specificity protein phosphatase PPS1 (PPS1).